The following is a 317-amino-acid chain: (R)-citramalyl-CoA lyase (317 aa).

One can recognise a Pyruvate carboxyltransferase domain in the interval 4–281 (VTIVDVAPRD…PTGIDLSALI (278 aa)). Arginine 12 is a binding site for substrate. Positions 13, 214, and 216 each coordinate a divalent metal cation. The active site involves cysteine 247. Asparagine 256 contributes to the a divalent metal cation binding site.

It belongs to the HMG-CoA lyase family. Homodimer. It depends on Mn(2+) as a cofactor. Co(2+) is required as a cofactor. Requires Ni(2+) as cofactor. The cofactor is Mg(2+).

The catalysed reaction is (3R)-citramalyl-CoA = pyruvate + acetyl-CoA. Its activity is regulated as follows. Activated by dithioerythritol (DTE) (in vitro). Involved in the glyoxylate assimilation cycle used to regenerate acetyl-CoA and produce pyruvate as universal precursor for biosynthesis. Catalyzes the cleavage of (R)-citramalyl-CoA to yield acetyl-CoA and pyruvate. This chain is (R)-citramalyl-CoA lyase (ccl), found in Chloroflexus aurantiacus (strain ATCC 29366 / DSM 635 / J-10-fl).